Reading from the N-terminus, the 1373-residue chain is DNA-directed RNA polymerase subunit beta (1373 aa).

It belongs to the RNA polymerase beta chain family. In terms of assembly, the RNAP catalytic core consists of 2 alpha, 1 beta, 1 beta' and 1 omega subunit. When a sigma factor is associated with the core the holoenzyme is formed, which can initiate transcription.

It catalyses the reaction RNA(n) + a ribonucleoside 5'-triphosphate = RNA(n+1) + diphosphate. Its function is as follows. DNA-dependent RNA polymerase catalyzes the transcription of DNA into RNA using the four ribonucleoside triphosphates as substrates. The sequence is that of DNA-directed RNA polymerase subunit beta from Lawsonia intracellularis (strain PHE/MN1-00).